Reading from the N-terminus, the 211-residue chain is ATP phosphoribosyltransferase (211 aa).

It belongs to the ATP phosphoribosyltransferase family. Short subfamily. Heteromultimer composed of HisG and HisZ subunits.

It localises to the cytoplasm. The catalysed reaction is 1-(5-phospho-beta-D-ribosyl)-ATP + diphosphate = 5-phospho-alpha-D-ribose 1-diphosphate + ATP. Its pathway is amino-acid biosynthesis; L-histidine biosynthesis; L-histidine from 5-phospho-alpha-D-ribose 1-diphosphate: step 1/9. In terms of biological role, catalyzes the condensation of ATP and 5-phosphoribose 1-diphosphate to form N'-(5'-phosphoribosyl)-ATP (PR-ATP). Has a crucial role in the pathway because the rate of histidine biosynthesis seems to be controlled primarily by regulation of HisG enzymatic activity. The protein is ATP phosphoribosyltransferase of Bacillus cereus (strain ATCC 10987 / NRS 248).